The chain runs to 254 residues: Methylthioribulose-1-phosphate dehydratase (254 aa).

C110 lines the substrate pocket. H127 and H129 together coordinate Zn(2+). The active-site Proton donor/acceptor is the E156. Zn(2+) is bound at residue H212.

Belongs to the aldolase class II family. MtnB subfamily. It depends on Zn(2+) as a cofactor.

Its subcellular location is the cytoplasm. The enzyme catalyses 5-(methylsulfanyl)-D-ribulose 1-phosphate = 5-methylsulfanyl-2,3-dioxopentyl phosphate + H2O. It functions in the pathway amino-acid biosynthesis; L-methionine biosynthesis via salvage pathway; L-methionine from S-methyl-5-thio-alpha-D-ribose 1-phosphate: step 2/6. Catalyzes the dehydration of methylthioribulose-1-phosphate (MTRu-1-P) into 2,3-diketo-5-methylthiopentyl-1-phosphate (DK-MTP-1-P). The chain is Methylthioribulose-1-phosphate dehydratase from Talaromyces marneffei (strain ATCC 18224 / CBS 334.59 / QM 7333) (Penicillium marneffei).